The following is a 1394-amino-acid chain: Adhesion and penetration protein autotransporter (1394 aa).

The signal sequence occupies residues 1-25; the sequence is MKKTVFRLNFLTACISLGIVSQAWA. The Peptidase S6 domain maps to 26 to 286; the sequence is GHTYFGIDYQ…QLVRKSYFDE (261 aa). Residue Ser243 is part of the active site. Disordered regions lie at residues 848–870 and 995–1027; these read AYSA…TPTS and TLEA…FPDT. The region spanning 1140-1394 is the Autotransporter domain; it reads VDQAQSAVWT…NVGVKLGYRW (255 aa).

The protein resides in the periplasm. It localises to the secreted. It is found in the cell surface. Its subcellular location is the cell outer membrane. Probable protease; promotes adherence and invasion by directly binding to a host cell structure. The chain is Adhesion and penetration protein autotransporter (hap) from Haemophilus influenzae.